Consider the following 209-residue polypeptide: Uracil phosphoribosyltransferase (209 aa).

Residues Arg-79, Arg-104, and 131–139 contribute to the 5-phospho-alpha-D-ribose 1-diphosphate site; that span reads DPMLATGGS. Uracil contacts are provided by residues Ile-194 and 199–201; that span reads GDA. Asp-200 contributes to the 5-phospho-alpha-D-ribose 1-diphosphate binding site.

This sequence belongs to the UPRTase family. It depends on Mg(2+) as a cofactor.

It carries out the reaction UMP + diphosphate = 5-phospho-alpha-D-ribose 1-diphosphate + uracil. It participates in pyrimidine metabolism; UMP biosynthesis via salvage pathway; UMP from uracil: step 1/1. Allosterically activated by GTP. Catalyzes the conversion of uracil and 5-phospho-alpha-D-ribose 1-diphosphate (PRPP) to UMP and diphosphate. This Streptococcus equi subsp. zooepidemicus (strain MGCS10565) protein is Uracil phosphoribosyltransferase.